We begin with the raw amino-acid sequence, 108 residues long: Thiosulfate sulfurtransferase GlpE (108 aa).

The Rhodanese domain occupies 18-106; that stretch reads ENEGATLADI…WERSGLPIET (89 aa). The Cysteine persulfide intermediate role is filled by C66.

It belongs to the GlpE family.

It is found in the cytoplasm. It catalyses the reaction thiosulfate + hydrogen cyanide = thiocyanate + sulfite + 2 H(+). It carries out the reaction thiosulfate + [thioredoxin]-dithiol = [thioredoxin]-disulfide + hydrogen sulfide + sulfite + 2 H(+). Its function is as follows. Transferase that catalyzes the transfer of sulfur from thiosulfate to thiophilic acceptors such as cyanide or dithiols. May function in a CysM-independent thiosulfate assimilation pathway by catalyzing the conversion of thiosulfate to sulfite, which can then be used for L-cysteine biosynthesis. The chain is Thiosulfate sulfurtransferase GlpE from Actinobacillus pleuropneumoniae serotype 3 (strain JL03).